A 100-amino-acid polypeptide reads, in one-letter code: Putative protein adenylyltransferase MJ0604 (100 aa).

Positions 29–43 (GSYARGDYTEESDID) match the GSX(10)DXD motif motif. 2 residues coordinate Mg(2+): Asp-41 and Asp-43.

The protein belongs to the MntA antitoxin family. Mg(2+) is required as a cofactor.

The catalysed reaction is L-tyrosyl-[protein] + ATP = O-(5'-adenylyl)-L-tyrosyl-[protein] + diphosphate. The enzyme catalyses O-(5'-adenylyl)-L-tyrosyl-[protein] + ATP = O-[5'-(adenylyl-(5'-&gt;3')-adenylyl)]-L-tyrosyl-[protein] + diphosphate. Its function is as follows. Putative antitoxin component of a putative type VII toxin-antitoxin (TA) system. Its cognate toxin might be MJ0605, which it might AMPylate. In Methanocaldococcus jannaschii (strain ATCC 43067 / DSM 2661 / JAL-1 / JCM 10045 / NBRC 100440) (Methanococcus jannaschii), this protein is Putative protein adenylyltransferase MJ0604.